The chain runs to 64 residues: Conotoxin reg3k (64 aa).

The first 20 residues, 1-20 (MMFKLGVLLTICLLLFPLTA), serve as a signal peptide directing secretion. Positions 21 to 48 (LQLDWDQPGDHMLDISSEIDDRWFDPVR) are excised as a propeptide. 3 cysteine pairs are disulfide-bonded: cysteine 50-cysteine 60, cysteine 51-cysteine 58, and cysteine 56-cysteine 61. At proline 59 the chain carries 4-hydroxyproline.

As to expression, expressed by the venom duct.

Its subcellular location is the secreted. This is Conotoxin reg3k from Conus regius (Crown cone).